The primary structure comprises 253 residues: Triosephosphate isomerase, cytosolic (253 aa).

Substrate is bound by residues N10 and K12. H96 functions as the Electrophile in the catalytic mechanism. The Proton acceptor role is filled by E166.

The protein belongs to the triosephosphate isomerase family. In terms of assembly, homodimer.

The protein localises to the cytoplasm. The enzyme catalyses D-glyceraldehyde 3-phosphate = dihydroxyacetone phosphate. The protein operates within carbohydrate biosynthesis; gluconeogenesis. It functions in the pathway carbohydrate degradation; glycolysis; D-glyceraldehyde 3-phosphate from glycerone phosphate: step 1/1. The polypeptide is Triosephosphate isomerase, cytosolic (Zea mays (Maize)).